Consider the following 133-residue polypeptide: Small ribosomal subunit protein uS9 (133 aa).

The interval 111–133 (PRRSESKKFGGPGARARKQKSYR) is disordered.

Belongs to the universal ribosomal protein uS9 family.

This chain is Small ribosomal subunit protein uS9, found in Methanosphaera stadtmanae (strain ATCC 43021 / DSM 3091 / JCM 11832 / MCB-3).